The sequence spans 449 residues: MLVNKVIGLLGVLFATRFTNAVELDLDNYESLQNATSLIAYGLMDYYTGNQYGKTVGMFSDPYYWWEAGGAWGCMLDYWFFMDNDTYNDEIIAAMIHQAGDDNDYIPLNQSTTEGNDDQAFWGIAAMTAAERNFTNPPENEPQWLYLAQAVFNTMALRWDADSCGGGLRWQIFVWNSGYDYKNTVSNGALFHIAARLARYTGNQTYVDWAEKVYEWMVGVNLISNGTYKYVYDGVSIDDNCTKVTSYQWTYNQGLLLAGSAYLYNFTGSDLWHTRTKEFLNASQVFFHDGIVYEAACQGPNSCNTDQRSFKAYFARFLGVTAQLVPETRNQIMSWLNTSAIAAAKSCSGGTDGHTCGLNWFNGTWDGMYGLGEQMSALEVMVNTRALDKPAPYTAENGGSSVGDGAAGTQAQPTNLAPLNITKGSKAGAGIITAVIGISIVACALWLVF.

Residues 1–21 (MLVNKVIGLLGVLFATRFTNA) form the signal peptide. N34, N84, N109, N133, N203, N225, N240, N265, N281, N337, N362, and N420 each carry an N-linked (GlcNAc...) asparagine glycan. The GPI-anchor amidated glycine moiety is linked to residue G428. Residues 429–449 (AGIITAVIGISIVACALWLVF) constitute a propeptide, removed in mature form.

This sequence belongs to the glycosyl hydrolase 76 family.

It localises to the cell membrane. The catalysed reaction is Random hydrolysis of (1-&gt;6)-alpha-D-mannosidic linkages in unbranched (1-&gt;6)-mannans.. Its function is as follows. Required for normal synthesis of the cell wall. The sequence is that of Mannan endo-1,6-alpha-mannosidase DCW1 (DCW1) from Saccharomyces cerevisiae (strain ATCC 204508 / S288c) (Baker's yeast).